We begin with the raw amino-acid sequence, 177 residues long: Large ribosomal subunit protein bL9 (177 aa).

The tract at residues 151 to 177 is disordered; the sequence is EDEEIAEAAPVAEAQAEADGHSTEETA. Positions 157–167 are enriched in low complexity; sequence EAAPVAEAQAE. Residues 168 to 177 show a composition bias toward basic and acidic residues; that stretch reads ADGHSTEETA.

Belongs to the bacterial ribosomal protein bL9 family.

Functionally, binds to the 23S rRNA. The protein is Large ribosomal subunit protein bL9 of Solidesulfovibrio magneticus (strain ATCC 700980 / DSM 13731 / RS-1) (Desulfovibrio magneticus).